Consider the following 812-residue polypeptide: DNA translocase FtsK 1 (812 aa).

Basic residues predominate over residues 1–11 (MTEKSHKKTAK). The tract at residues 1-36 (MTEKSHKKTAKGRAGSPSPTSARNKKADNGARGNKV) is disordered. Over residues 25–36 (KKADNGARGNKV) the composition is skewed to basic and acidic residues. The next 5 membrane-spanning stretches (helical) occupy residues 63–83 (IGDALWLMGLAATLYLVISLI), 116–136 (VGYYLFGWSFWWWIAAACVML), 156–176 (IAAAALFVLTVFSPVLEYFVL), 184–204 (LPVGAGGMVGIRVGAVFAWLL), and 210–230 (LLIILVVLLLSLSLLVQISWL). The Cytoplasmic segment spans residues 231 to 812 (EFLNGAGRAV…RKILAHKDHL (582 aa)). Residues 461 to 670 (GTPVVGDLAK…FTVQSKIDSR (210 aa)) enclose the FtsK domain. 481 to 486 (GSGKSV) serves as a coordination point for ATP.

The protein belongs to the FtsK/SpoIIIE/SftA family. As to quaternary structure, homohexamer. Forms a ring that surrounds DNA.

It localises to the cell inner membrane. Functionally, essential cell division protein that coordinates cell division and chromosome segregation. The N-terminus is involved in assembly of the cell-division machinery. The C-terminus functions as a DNA motor that moves dsDNA in an ATP-dependent manner towards the dif recombination site, which is located within the replication terminus region. Translocation stops specifically at Xer-dif sites, where FtsK interacts with the Xer recombinase, allowing activation of chromosome unlinking by recombination. FtsK orienting polar sequences (KOPS) guide the direction of DNA translocation. FtsK can remove proteins from DNA as it translocates, but translocation stops specifically at XerCD-dif site, thereby preventing removal of XerC and XerD from dif. The protein is DNA translocase FtsK 1 (ftsK1) of Neisseria meningitidis serogroup A / serotype 4A (strain DSM 15465 / Z2491).